The chain runs to 311 residues: Dof zinc finger protein DOF1.4 (311 aa).

A compositionally biased stretch (polar residues) spans M1 to H12. The disordered stretch occupies residues M1–C29. Residues Q13–Q26 are compositionally biased toward low complexity. The segment at L27–R81 adopts a Dof-type zinc-finger fold. Residues C29, C32, C54, and C57 each contribute to the Zn(2+) site. The interval V72 to I110 is disordered. The span at P85–P107 shows a compositional bias: low complexity.

The protein resides in the nucleus. Transcription factor that binds specifically to a 5'-AA[AG]G-3' consensus core sequence. The chain is Dof zinc finger protein DOF1.4 (DOF1.4) from Arabidopsis thaliana (Mouse-ear cress).